We begin with the raw amino-acid sequence, 40 residues long: Photosystem II reaction center protein X (40 aa).

A helical membrane pass occupies residues 10-30 (FFYSILFGAIVLGLLGGGFIF).

Belongs to the PsbX family. Type 1 subfamily. As to quaternary structure, PSII is composed of 1 copy each of membrane proteins PsbA, PsbB, PsbC, PsbD, PsbE, PsbF, PsbH, PsbI, PsbJ, PsbK, PsbL, PsbM, PsbT, PsbX, PsbY, PsbZ, Psb30/Ycf12, peripheral proteins PsbO, CyanoQ (PsbQ), PsbU, PsbV and a large number of cofactors. It forms dimeric complexes.

It localises to the cellular thylakoid membrane. Its function is as follows. Involved in the binding and/or turnover of quinones at the Q(B) site of photosystem II (PSII). PSII is a light-driven water plastoquinone oxidoreductase, using light energy to abstract electrons from H(2)O, generating a proton gradient subsequently used for ATP formation. In Acaryochloris marina (strain MBIC 11017), this protein is Photosystem II reaction center protein X.